Consider the following 285-residue polypeptide: MVAITAALVKELRERTAAGMMECKKALVEANGDIELAIDNMRKSGQAKAAKKAGRIAAEGIILAKVSADGKYGVILELNCETDFVAKDAGFKAFGEEVINAALAEKIADIDVLKAKFEEQRANLVAKIGENINIRRVAVLEGDILGTYLHGARIGVMVAATGADEELVKHIAMHIAASKPEYVKPDDVPAEVVAREHQIQLDIAIESGKPREIAEKMVEGRMRKFTGEVSLTGQNFVMDPSKTVGDLLKENNADVVNFIRFEVGEGIEKVETDFAAEVAAMSKQS.

Residues 82 to 85 (TDFV) are involved in Mg(2+) ion dislocation from EF-Tu.

Belongs to the EF-Ts family.

It is found in the cytoplasm. In terms of biological role, associates with the EF-Tu.GDP complex and induces the exchange of GDP to GTP. It remains bound to the aminoacyl-tRNA.EF-Tu.GTP complex up to the GTP hydrolysis stage on the ribosome. The protein is Elongation factor Ts of Yersinia pseudotuberculosis serotype O:1b (strain IP 31758).